Reading from the N-terminus, the 271-residue chain is Formamidopyrimidine-DNA glycosylase (271 aa).

The Schiff-base intermediate with DNA role is filled by Pro2. Glu3 (proton donor) is an active-site residue. Lys57 serves as the catalytic Proton donor; for beta-elimination activity. 3 residues coordinate DNA: His90, Arg109, and Lys151. The FPG-type zinc-finger motif lies at 236–270; that stretch reads HVYGRGGESCTQCGNLLSEIKLGQRATVFCGLCQT. Arg260 functions as the Proton donor; for delta-elimination activity in the catalytic mechanism.

Belongs to the FPG family. Monomer. It depends on Zn(2+) as a cofactor.

It catalyses the reaction Hydrolysis of DNA containing ring-opened 7-methylguanine residues, releasing 2,6-diamino-4-hydroxy-5-(N-methyl)formamidopyrimidine.. The catalysed reaction is 2'-deoxyribonucleotide-(2'-deoxyribose 5'-phosphate)-2'-deoxyribonucleotide-DNA = a 3'-end 2'-deoxyribonucleotide-(2,3-dehydro-2,3-deoxyribose 5'-phosphate)-DNA + a 5'-end 5'-phospho-2'-deoxyribonucleoside-DNA + H(+). Involved in base excision repair of DNA damaged by oxidation or by mutagenic agents. Acts as a DNA glycosylase that recognizes and removes damaged bases. Has a preference for oxidized purines, such as 7,8-dihydro-8-oxoguanine (8-oxoG). Has AP (apurinic/apyrimidinic) lyase activity and introduces nicks in the DNA strand. Cleaves the DNA backbone by beta-delta elimination to generate a single-strand break at the site of the removed base with both 3'- and 5'-phosphates. The protein is Formamidopyrimidine-DNA glycosylase of Shewanella woodyi (strain ATCC 51908 / MS32).